Consider the following 103-residue polypeptide: Small ribosomal subunit protein uS14c (103 aa).

The tract at residues 27–56 (SKKKIRSKVSPLSLSEKTKMQEKLQSLPRN) is disordered.

This sequence belongs to the universal ribosomal protein uS14 family. In terms of assembly, part of the 30S ribosomal subunit.

The protein resides in the plastid. It is found in the chloroplast. Its function is as follows. Binds 16S rRNA, required for the assembly of 30S particles. In Zea mays (Maize), this protein is Small ribosomal subunit protein uS14c.